We begin with the raw amino-acid sequence, 381 residues long: Cytosolic acyl coenzyme A thioester hydrolase (381 aa).

The HotDog ACOT-type 1 domain maps to 51 to 169; sequence PGHCIAMGRI…TLWYVPLSLK (119 aa). Asparagine 67 is a catalytic residue. 2 positions are modified to N6-acetyllysine: lysine 169 and lysine 199. Positions 225-339 constitute a HotDog ACOT-type 2 domain; the sequence is SYSQSSLIHL…FFTYVSLNQE (115 aa). The active site involves aspartate 256. Lysine 284 is modified (N6-acetyllysine). The tract at residues 343–381 is disordered; that stretch reads LPVPQLVPETEDEKKRFEEGKGRYLQMKAKRQGHTEPQP. The segment covering 354–364 has biased composition (basic and acidic residues); it reads DEKKRFEEGKG.

As to quaternary structure, homohexamer. Post-translationally, the N-terminus is blocked. As to expression, isoform 1 is expressed constitutively in brain and testis. Isoform 2 is induced in liver by treatment with the peroxisome proliferator.

It is found in the cytoplasm. It localises to the cytosol. The catalysed reaction is hexadecanoyl-CoA + H2O = hexadecanoate + CoA + H(+). It carries out the reaction dodecanoyl-CoA + H2O = dodecanoate + CoA + H(+). The enzyme catalyses tetradecanoyl-CoA + H2O = tetradecanoate + CoA + H(+). It catalyses the reaction decanoyl-CoA + H2O = decanoate + CoA + H(+). The catalysed reaction is octanoyl-CoA + H2O = octanoate + CoA + H(+). It carries out the reaction octadecanoyl-CoA + H2O = octadecanoate + CoA + H(+). The enzyme catalyses (9Z)-octadecenoyl-CoA + H2O = (9Z)-octadecenoate + CoA + H(+). It functions in the pathway lipid metabolism; fatty acid metabolism. Catalyzes the hydrolysis of acyl-CoAs into free fatty acids and coenzyme A (CoASH), regulating their respective intracellular levels. Preferentially hydrolyzes palmitoyl-CoA, but has a broad specificity acting on other fatty acyl-CoAs with chain-lengths of C8-C18. May play an important physiological function in brain. The polypeptide is Cytosolic acyl coenzyme A thioester hydrolase (Acot7) (Rattus norvegicus (Rat)).